The primary structure comprises 61 residues: MDPNCSCAAGDSCTCAGSCKCKECKCTSCKKSCCSCCPVGCAKCAQGCICKGASDKCSCCA.

At methionine 1 the chain carries N-acetylmethionine. Positions 1-29 (MDPNCSCAAGDSCTCAGSCKCKECKCTSC) are beta. The a divalent metal cation site is built by cysteine 5, cysteine 7, cysteine 13, cysteine 15, cysteine 19, cysteine 21, cysteine 24, cysteine 26, cysteine 29, cysteine 33, cysteine 34, cysteine 36, cysteine 37, cysteine 41, cysteine 44, cysteine 48, cysteine 50, and cysteine 57. Residues 30 to 61 (KKSCCSCCPVGCAKCAQGCICKGASDKCSCCA) form an alpha region. A Phosphoserine modification is found at serine 58. Residues cysteine 59 and cysteine 60 each contribute to the a divalent metal cation site.

The protein belongs to the metallothionein superfamily. Type 1 family. As to quaternary structure, interacts with EOLA1.

Functionally, metallothioneins have a high content of cysteine residues that bind various heavy metals; these proteins are transcriptionally regulated by both heavy metals and glucocorticoids. In Homo sapiens (Human), this protein is Metallothionein-2.